The following is a 376-amino-acid chain: Lipoprotein p33 (376 aa).

A signal peptide spans 1–30; the sequence is MKIKKIKLLKALALTGAFGIVATVPVIVYS. C31 carries the N-palmitoyl cysteine lipid modification. A lipid anchor (S-diacylglycerol cysteine) is attached at C31. Positions 35 to 59 are disordered; that stretch reads DNNGGTGDNNTGGGGSGTDQQQGTT. Residues 38–51 show a composition bias toward gly residues; that stretch reads GGTGDNNTGGGGSG.

This sequence belongs to the p35 lipoprotein family.

Its subcellular location is the cell membrane. This chain is Lipoprotein p33, found in Malacoplasma penetrans (Mycoplasma penetrans).